We begin with the raw amino-acid sequence, 409 residues long: Tryptophan synthase beta chain 1 (409 aa).

N6-(pyridoxal phosphate)lysine is present on lysine 104.

This sequence belongs to the TrpB family. Tetramer of two alpha and two beta chains. Requires pyridoxal 5'-phosphate as cofactor.

It catalyses the reaction (1S,2R)-1-C-(indol-3-yl)glycerol 3-phosphate + L-serine = D-glyceraldehyde 3-phosphate + L-tryptophan + H2O. It functions in the pathway amino-acid biosynthesis; L-tryptophan biosynthesis; L-tryptophan from chorismate: step 5/5. The beta subunit is responsible for the synthesis of L-tryptophan from indole and L-serine. This Nostoc sp. (strain PCC 7120 / SAG 25.82 / UTEX 2576) protein is Tryptophan synthase beta chain 1 (trpB1).